Consider the following 565-residue polypeptide: Pentatricopeptide repeat-containing protein At3g20730 (565 aa).

PPR repeat units lie at residues 12 to 46 (SPSLYLKALKLCSYQNVKKQLLLIHGNSITNGFCS), 47 to 77 (NLQLKDMLIDLYLKQGDVKHARKLFDRISKR), 78 to 112 (DVVSWTAMISRFSRCGYHPDALLLFKEMHREDVKA), 113 to 147 (NQFTYGSVLKSCKDLGCLKEGMQIHGSVEKGNCAG), 148 to 178 (NLIVRSALLSLYARCGKMEEARLQFDSMKER), 179 to 213 (DLVSWNAMIDGYTANACADTSFSLFQLMLTEGKKP), 214 to 248 (DCFTFGSLLRASIVVKCLEIVSELHGLAIKLGFGR), 249 to 279 (SSALIRSLVNAYVKCGSLANAWKLHEGTKKR), 280 to 315 (DLLSCTALITGFSQQNNCTSDAFDIFKDMIRMKTKM), 316 to 351 (DEVVVSSMLKICTTIASVTIGRQIHGFALKSSQIRF), 352 to 382 (DVALGNSLIDMYAKSGEIEDAVLAFEEMKEK), 383 to 417 (DVRSWTSLIAGYGRHGNFEKAIDLYNRMEHERIKP), 418 to 448 (NDVTFLSLLSACSHTGQTELGWKIYDTMINK), and 454 to 484 (REEHLSCIIDMLARSGYLEEAYALIRSKEGI). Residues 491–565 (TWGAFLDACR…NKAPGYSLVY (75 aa)) form a type E motif; degenerate region.

It belongs to the PPR family. PCMP-E subfamily.

The polypeptide is Pentatricopeptide repeat-containing protein At3g20730 (PCMP-E94) (Arabidopsis thaliana (Mouse-ear cress)).